The primary structure comprises 627 residues: Probable inactive receptor kinase At3g02880 (627 aa).

The N-terminal stretch at 1-23 (MKYKRKLSLSVVFLFVFYLAAVT) is a signal peptide. 5 LRR repeats span residues 91-112 (QLKTLSLRFNSLSGPIPSDFSN), 115-137 (LLRYLYLQGNAFSGEIPSLLFTL), 139-161 (SIIRINLGENKFSGRIPDNVNSA), 163-184 (RLVTLYLERNQLSGPIPEITLP), and 185-206 (LQQFNVSSNQLNGSIPSSLSSW). The tract at residues 222 to 246 (DTCEAESPNGGDAGGPNTPPEKKDS) is disordered. A helical transmembrane segment spans residues 253 to 273 (AIVGIVIGCVVGLLLLLLILF). Positions 345–620 (KASAEVLGKG…LIEEVSHSSG (276 aa)) constitute a Protein kinase domain. A Phosphoserine modification is found at serine 347. ATP contacts are provided by residues 351-359 (LGKGTVGSS) and lysine 373. A helical transmembrane segment spans residues 389 to 409 (LHVLGSMSHANLVTLIAYYFS). At serine 424 the chain carries Phosphoserine. Threonine 444 carries the post-translational modification Phosphothreonine. At serine 519 the chain carries Phosphoserine. Position 595 is a phosphothreonine (threonine 595). 2 positions are modified to phosphoserine: serine 621 and serine 626.

The protein belongs to the protein kinase superfamily. Ser/Thr protein kinase family.

It localises to the membrane. The sequence is that of Probable inactive receptor kinase At3g02880 from Arabidopsis thaliana (Mouse-ear cress).